Here is a 322-residue protein sequence, read N- to C-terminus: Biotin synthase (322 aa).

Residues 39 to 266 form the Radical SAM core domain; sequence NQVQISSLLN…KSVVRLSAGR (228 aa). [4Fe-4S] cluster contacts are provided by C54, C58, and C61. [2Fe-2S] cluster is bound by residues C98, C129, C189, and R261.

This sequence belongs to the radical SAM superfamily. Biotin synthase family. Homodimer. [4Fe-4S] cluster serves as cofactor. Requires [2Fe-2S] cluster as cofactor.

It catalyses the reaction (4R,5S)-dethiobiotin + (sulfur carrier)-SH + 2 reduced [2Fe-2S]-[ferredoxin] + 2 S-adenosyl-L-methionine = (sulfur carrier)-H + biotin + 2 5'-deoxyadenosine + 2 L-methionine + 2 oxidized [2Fe-2S]-[ferredoxin]. Its pathway is cofactor biosynthesis; biotin biosynthesis; biotin from 7,8-diaminononanoate: step 2/2. Catalyzes the conversion of dethiobiotin (DTB) to biotin by the insertion of a sulfur atom into dethiobiotin via a radical-based mechanism. In Vesicomyosocius okutanii subsp. Calyptogena okutanii (strain HA), this protein is Biotin synthase.